A 250-amino-acid chain; its full sequence is Ribosomal large subunit pseudouridine synthase B (250 aa).

The S4 RNA-binding domain maps to 3 to 73 (EKIQKILSHL…FKTKIIIYNK (71 aa)). Aspartate 109 acts as the Nucleophile in catalysis.

Belongs to the pseudouridine synthase RsuA family.

It carries out the reaction uridine(2605) in 23S rRNA = pseudouridine(2605) in 23S rRNA. Responsible for synthesis of pseudouridine from uracil-2605 in 23S ribosomal RNA. This chain is Ribosomal large subunit pseudouridine synthase B (rluB), found in Buchnera aphidicola subsp. Acyrthosiphon pisum (strain APS) (Acyrthosiphon pisum symbiotic bacterium).